Consider the following 474-residue polypeptide: 3-isopropylmalate dehydratase large subunit (474 aa).

Residues C352, C413, and C416 each contribute to the [4Fe-4S] cluster site.

It belongs to the aconitase/IPM isomerase family. LeuC type 1 subfamily. As to quaternary structure, heterodimer of LeuC and LeuD. Requires [4Fe-4S] cluster as cofactor.

The enzyme catalyses (2R,3S)-3-isopropylmalate = (2S)-2-isopropylmalate. It participates in amino-acid biosynthesis; L-leucine biosynthesis; L-leucine from 3-methyl-2-oxobutanoate: step 2/4. Functionally, catalyzes the isomerization between 2-isopropylmalate and 3-isopropylmalate, via the formation of 2-isopropylmaleate. This is 3-isopropylmalate dehydratase large subunit from Pseudomonas savastanoi pv. phaseolicola (strain 1448A / Race 6) (Pseudomonas syringae pv. phaseolicola (strain 1448A / Race 6)).